A 228-amino-acid polypeptide reads, in one-letter code: Putative elongation factor Tu-like protein (228 aa).

A tr-type G domain is found at 6–212 (KPHINVGTIG…LPIREKDNPF (207 aa)). The segment at 15 to 22 (GHVDHGKT) is G1. The G2 stretch occupies residues 59 to 63 (GITIS). The interval 80–83 (DCPG) is G3. Residues 135 to 138 (NKCD) form a G4 region. The segment at 173-175 (SAV) is G5.

Belongs to the TRAFAC class translation factor GTPase superfamily. Classic translation factor GTPase family. EF-Tu/EF-1A subfamily.

This chain is Putative elongation factor Tu-like protein, found in Ehrlichia ruminantium (strain Welgevonden).